Consider the following 157-residue polypeptide: SsrA-binding protein (157 aa).

Residues 128–157 (LARGKKQHDKRAAEKERDWEREKQRVMRRG) are disordered. The span at 137 to 157 (KRAAEKERDWEREKQRVMRRG) shows a compositional bias: basic and acidic residues.

The protein belongs to the SmpB family.

The protein resides in the cytoplasm. Its function is as follows. Required for rescue of stalled ribosomes mediated by trans-translation. Binds to transfer-messenger RNA (tmRNA), required for stable association of tmRNA with ribosomes. tmRNA and SmpB together mimic tRNA shape, replacing the anticodon stem-loop with SmpB. tmRNA is encoded by the ssrA gene; the 2 termini fold to resemble tRNA(Ala) and it encodes a 'tag peptide', a short internal open reading frame. During trans-translation Ala-aminoacylated tmRNA acts like a tRNA, entering the A-site of stalled ribosomes, displacing the stalled mRNA. The ribosome then switches to translate the ORF on the tmRNA; the nascent peptide is terminated with the 'tag peptide' encoded by the tmRNA and targeted for degradation. The ribosome is freed to recommence translation, which seems to be the essential function of trans-translation. The chain is SsrA-binding protein from Methylococcus capsulatus (strain ATCC 33009 / NCIMB 11132 / Bath).